Here is a 629-residue protein sequence, read N- to C-terminus: Arginine--tRNA ligase (629 aa).

A 'HIGH' region motif is present at residues 128 to 138 (VNPTKPLHMGH).

The protein belongs to the class-I aminoacyl-tRNA synthetase family.

The protein localises to the cytoplasm. The catalysed reaction is tRNA(Arg) + L-arginine + ATP = L-arginyl-tRNA(Arg) + AMP + diphosphate. This chain is Arginine--tRNA ligase (argS), found in Pyrococcus horikoshii (strain ATCC 700860 / DSM 12428 / JCM 9974 / NBRC 100139 / OT-3).